Reading from the N-terminus, the 151-residue chain is Peptide methionine sulfoxide reductase MsrB (151 aa).

Positions 5 to 127 (KEERLKQLTR…NSAALRFVPK (123 aa)) constitute a MsrB domain. C116 (nucleophile) is an active-site residue.

The protein belongs to the MsrB Met sulfoxide reductase family.

It catalyses the reaction L-methionyl-[protein] + [thioredoxin]-disulfide + H2O = L-methionyl-(R)-S-oxide-[protein] + [thioredoxin]-dithiol. This Bacillus licheniformis (strain ATCC 14580 / DSM 13 / JCM 2505 / CCUG 7422 / NBRC 12200 / NCIMB 9375 / NCTC 10341 / NRRL NRS-1264 / Gibson 46) protein is Peptide methionine sulfoxide reductase MsrB.